The chain runs to 357 residues: Glutamine synthetase root isozyme 5 (357 aa).

Residues 19-99 (IIAEYIWVGG…VMCDCYTPQG (81 aa)) enclose the GS beta-grasp domain. The region spanning 106-357 (KRYKAATVFS…ADTTILWKGN (252 aa)) is the GS catalytic domain.

The protein belongs to the glutamine synthetase family. In terms of assembly, homooctamer. As to expression, found mainly in the cortical tissues of seedling roots, stem and seedling shoot.

The protein resides in the cytoplasm. It catalyses the reaction L-glutamate + NH4(+) + ATP = L-glutamine + ADP + phosphate + H(+). Functionally, plays a role in the flow of nitrogen into nitrogenous organic compounds. The chain is Glutamine synthetase root isozyme 5 (GS1-5) from Zea mays (Maize).